We begin with the raw amino-acid sequence, 139 residues long: Flagellar assembly factor FliW 2 (139 aa).

This sequence belongs to the FliW family. Interacts with translational regulator CsrA and flagellin(s).

The protein localises to the cytoplasm. Acts as an anti-CsrA protein, binds CsrA and prevents it from repressing translation of its target genes, one of which is flagellin. Binds to flagellin and participates in the assembly of the flagellum. This is Flagellar assembly factor FliW 2 from Helicobacter hepaticus (strain ATCC 51449 / 3B1).